The primary structure comprises 180 residues: Crossover junction endodeoxyribonuclease RuvC (180 aa).

Active-site residues include aspartate 7, glutamate 66, and aspartate 138. Aspartate 7, glutamate 66, and aspartate 138 together coordinate Mg(2+).

The protein belongs to the RuvC family. In terms of assembly, homodimer which binds Holliday junction (HJ) DNA. The HJ becomes 2-fold symmetrical on binding to RuvC with unstacked arms; it has a different conformation from HJ DNA in complex with RuvA. In the full resolvosome a probable DNA-RuvA(4)-RuvB(12)-RuvC(2) complex forms which resolves the HJ. It depends on Mg(2+) as a cofactor.

The protein resides in the cytoplasm. It catalyses the reaction Endonucleolytic cleavage at a junction such as a reciprocal single-stranded crossover between two homologous DNA duplexes (Holliday junction).. Its function is as follows. The RuvA-RuvB-RuvC complex processes Holliday junction (HJ) DNA during genetic recombination and DNA repair. Endonuclease that resolves HJ intermediates. Cleaves cruciform DNA by making single-stranded nicks across the HJ at symmetrical positions within the homologous arms, yielding a 5'-phosphate and a 3'-hydroxyl group; requires a central core of homology in the junction. The consensus cleavage sequence is 5'-(A/T)TT(C/G)-3'. Cleavage occurs on the 3'-side of the TT dinucleotide at the point of strand exchange. HJ branch migration catalyzed by RuvA-RuvB allows RuvC to scan DNA until it finds its consensus sequence, where it cleaves and resolves the cruciform DNA. In Burkholderia orbicola (strain AU 1054), this protein is Crossover junction endodeoxyribonuclease RuvC.